The primary structure comprises 216 residues: MTVTNNEIAREFAERLLAIEAVSLSPDAPFTWASGLHSPIYCDNRVTLSDPQTRDLIADGLASLVRTNFHQVDVVAGTATAGIAHAALAADRLGAPMAYVRSVPKDHGRGNQIEGRIPAHSKVIMVEDLISTGGSVLKAAQAVEREGSTVVGVLALFSYELEKGHRAFEKAGVPLYTLSNYPILIEVAAESGRITSEQQATLATWSSDPQAWSDAH.

5-phospho-alpha-D-ribose 1-diphosphate-binding positions include R101, K105, H107, and 127 to 135 (EDLISTGGS). Residue S131 participates in orotate binding.

This sequence belongs to the purine/pyrimidine phosphoribosyltransferase family. PyrE subfamily. As to quaternary structure, homodimer. It depends on Mg(2+) as a cofactor.

It catalyses the reaction orotidine 5'-phosphate + diphosphate = orotate + 5-phospho-alpha-D-ribose 1-diphosphate. Its pathway is pyrimidine metabolism; UMP biosynthesis via de novo pathway; UMP from orotate: step 1/2. Its function is as follows. Catalyzes the transfer of a ribosyl phosphate group from 5-phosphoribose 1-diphosphate to orotate, leading to the formation of orotidine monophosphate (OMP). This Cutibacterium acnes (strain DSM 16379 / KPA171202) (Propionibacterium acnes) protein is Orotate phosphoribosyltransferase.